A 369-amino-acid polypeptide reads, in one-letter code: Anhydro-N-acetylmuramic acid kinase (369 aa).

Gly-12–Asp-19 contacts ATP.

Belongs to the anhydro-N-acetylmuramic acid kinase family.

It carries out the reaction 1,6-anhydro-N-acetyl-beta-muramate + ATP + H2O = N-acetyl-D-muramate 6-phosphate + ADP + H(+). Its pathway is amino-sugar metabolism; 1,6-anhydro-N-acetylmuramate degradation. It participates in cell wall biogenesis; peptidoglycan recycling. In terms of biological role, catalyzes the specific phosphorylation of 1,6-anhydro-N-acetylmuramic acid (anhMurNAc) with the simultaneous cleavage of the 1,6-anhydro ring, generating MurNAc-6-P. Is required for the utilization of anhMurNAc either imported from the medium or derived from its own cell wall murein, and thus plays a role in cell wall recycling. This Shewanella sp. (strain MR-4) protein is Anhydro-N-acetylmuramic acid kinase.